Consider the following 1005-residue polypeptide: Beta-galactosidase (1005 aa).

E455 serves as the catalytic Proton donor. The active-site Nucleophile is the E526.

This sequence belongs to the glycosyl hydrolase 2 family.

The enzyme catalyses Hydrolysis of terminal non-reducing beta-D-galactose residues in beta-D-galactosides.. The sequence is that of Beta-galactosidase (lacZ) from Actinobacillus pleuropneumoniae (Haemophilus pleuropneumoniae).